The following is a 2871-amino-acid chain: Desmoplakin (2871 aa).

An interaction with PKP1, JUP, PKP2 region spans residues 1–584; sequence MSCNGGSHPR…DYMKTIADLE (584 aa). Residues 1–1056 form a globular 1 region; that stretch reads MSCNGGSHPR…ANSENCNKNK (1056 aa). A phosphoserine mark is found at S22 and S53. Y56 carries the phosphotyrosine modification. At T61 the chain carries Phosphothreonine. Phosphoserine is present on residues S165, S166, and S176. 2 Spectrin repeats span residues 178–271 and 272–375; these read SGWD…HLRQ and LQNI…LKEN. Residues 376 to 446 form a Spectrin 3a repeat; sequence AAYFQFFEEA…NLVNKSKKIV (71 aa). The 58-residue stretch at 458 to 515 folds into the SH3 domain; that stretch reads NKPIILRALCDYKQDQKIVHKGDECILKDNNERSKWYVTGPGGVDMLVPSVGLIIPPP. The Spectrin 3b repeat unit spans residues 516–545; sequence NPLAVDLSCKIEQYYEAILALWNQLYINMK. 3 Spectrin repeats span residues 546–627, 654–769, and 770–883; these read SLVS…IQLP, VIET…SLCT, and VRAL…DLEK. The stretch at 1018 to 1945 forms a coiled coil; the sequence is SEMLKSLEDL…QREIDKLRQR (928 aa). A central fibrous rod domain region spans residues 1057–1945; it reads FLDQNLQKYQ…QREIDKLRQR (889 aa). A phosphoserine mark is found at S1658, S1708, and S2024. The globular 2 stretch occupies residues 1946-2871; sequence PYGSHRETQT…YSFSSSSIGH (926 aa). The tract at residues 1960 to 2208 is 4.5 X 38 AA tandem repeats (Domain A); that stretch reads TVDTSKLVFD…LLLSVQKRSM (249 aa). Plectin repeat units lie at residues 2009-2045, 2046-2083, 2084-2121, 2122-2159, 2163-2197, 2198-2233, 2251-2288, 2289-2326, 2327-2364, 2365-2402, 2406-2440, 2456-2493, 2507-2544, 2610-2647, 2648-2685, 2724-2761, and 2762-2799; these read QPFL…PEST, VMLL…FDDR, QQIY…RETG, MRLL…RDLY, NDPR…PHTG, LLLL…PSTV, KDFL…PGTA, LELL…IEFK, EKLL…KGHG, IRLL…EELS, SDPS…EETG, SQKN…YETF, TITG…RKFF, SDTL…SITG, QRLL…QDMA, QRFL…GRAA, and QRLQ…DITG. A phosphoserine mark is found at S2207, S2209, and S2225. A 4.5 X 38 AA tandem repeats (Domain B) region spans residues 2244-2446; sequence DEVGERIKDF…EETGLCLLPL (203 aa). Residues 2609–2822 form a 4.5 X 38 AA tandem repeats (Domain C) region; it reads FSDTLEESSP…LPSPYNMSSA (214 aa). Phosphoserine is present on residues S2810 and S2815. A compositionally biased stretch (polar residues) spans 2810 to 2823; sequence SKGLPSPYNMSSAP. Residues 2810 to 2871 are disordered; that stretch reads SKGLPSPYNM…YSFSSSSIGH (62 aa). At Y2817 the chain carries Phosphotyrosine. Phosphoserine occurs at positions 2820, 2821, and 2825. The 6 X 4 AA tandem repeats of G-S-R-[SR] stretch occupies residues 2824-2847; the sequence is GSRSGSRSGSRSGSRSGSRSGSRR. The span at 2824–2847 shows a compositional bias: low complexity; that stretch reads GSRSGSRSGSRSGSRSGSRSGSRR. Residues R2826 and R2847 each carry the omega-N-methylarginine modification. S2849 is modified (phosphoserine). Position 2853 is a phosphothreonine (T2853). Residues 2856–2871 show a composition bias toward low complexity; the sequence is SSYSYSYSFSSSSIGH. At S2868 the chain carries Phosphoserine.

It belongs to the plakin or cytolinker family. In terms of assembly, homodimer. Interacts with COL17A1 (via cytoplasmic region). Interacts with DSC2. Interacts with PKP2. Interacts with PKP1. Interacts weakly with TMEM65. Post-translationally, phosphorylation at Ser-2849 increases association with intermediate filament cytokeratin, potentially facilitating interaction between desmosome junctions and intermediate filament architecture. In terms of tissue distribution, expressed in oral mucosa (at protein level). Expressed in arrector pili muscle (at protein level). Expressed in the heart in the heart (at protein level). Apparently an obligate constituent of all desmosomes. As to expression, resides predominantly in tissues and cells of stratified origin.

It is found in the cell junction. The protein localises to the desmosome. The protein resides in the cell membrane. It localises to the cytoplasm. Major high molecular weight protein of desmosomes. Regulates profibrotic gene expression in cardiomyocytes via activation of the MAPK14/p38 MAPK signaling cascade and increase in TGFB1 protein abundance. This chain is Desmoplakin (DSP), found in Homo sapiens (Human).